The sequence spans 295 residues: Inositol monophosphatase 1 (295 aa).

E73, D92, I94, D95, and D231 together coordinate Mg(2+). Position 73 (E73) interacts with substrate. Residues 94-97 (IDGT) and D231 contribute to the substrate site.

The protein belongs to the inositol monophosphatase superfamily. Mg(2+) serves as cofactor.

Its subcellular location is the cytoplasm. The protein resides in the nucleus. The enzyme catalyses a myo-inositol phosphate + H2O = myo-inositol + phosphate. Its pathway is polyol metabolism; myo-inositol biosynthesis; myo-inositol from D-glucose 6-phosphate: step 2/2. With respect to regulation, inhibited by Li(+) and Na(+). Functionally, responsible for the provision of inositol required for synthesis of phosphatidylinositol and polyphosphoinositides. This is Inositol monophosphatase 1 (INM1) from Saccharomyces cerevisiae (strain ATCC 204508 / S288c) (Baker's yeast).